A 90-amino-acid polypeptide reads, in one-letter code: Guanine nucleotide-binding protein subunit gamma (90 aa).

The S-palmitoyl cysteine moiety is linked to residue Cys86. Cys87 carries the post-translational modification Cysteine methyl ester. Cys87 is lipidated: S-farnesyl cysteine. Residues Cys88–Met90 constitute a propeptide, removed in mature form.

It belongs to the G protein gamma family. As to quaternary structure, g proteins are composed of 3 units, alpha, beta and gamma.

It is found in the membrane. The polypeptide is Guanine nucleotide-binding protein subunit gamma (Eremothecium gossypii (strain ATCC 10895 / CBS 109.51 / FGSC 9923 / NRRL Y-1056) (Yeast)).